The chain runs to 416 residues: Neamine transaminase NeoN (416 aa).

Lysine 231 carries the post-translational modification N6-(pyridoxal phosphate)lysine.

Belongs to the class-III pyridoxal-phosphate-dependent aminotransferase family. The cofactor is pyridoxal 5'-phosphate.

It carries out the reaction neomycin C + 2-oxoglutarate = 6'''-deamino-6'''-oxoneomycin C + L-glutamate. The catalysed reaction is neamine + 2-oxoglutarate = 6'-oxoparomamine + L-glutamate. It participates in antibiotic biosynthesis; neomycin biosynthesis. Its function is as follows. 6'-oxoglucosaminyl:L-glutamate aminotransferase that catalyzes pyridoxal-5'-phosphate-mediated transamination for the conversion of paromamine to neamine in the biosynthetic pathway of neomycin. Also able to catalyze deamination at C-6''' of neomycin. In Streptomyces fradiae (Streptomyces roseoflavus), this protein is Neamine transaminase NeoN (neoN).